The chain runs to 920 residues: Nonribosomal peptide synthetase atrA (920 aa).

Positions 13 to 428 (AAAQERCGRV…AGRLKETMII (416 aa)) are adenylation (A) domain. The Carrier domain occupies 558–637 (PPKDELERSL…ELSAALHDLQ (80 aa)). An O-(pantetheine 4'-phosphoryl)serine modification is found at Ser-595. The tract at residues 656–905 (PLWLIHPGVG…YTMLAPEHVF (250 aa)) is thioesterase (TE) domain.

The protein belongs to the NRP synthetase family.

The enzyme catalyses 2 3-(4-hydroxyphenyl)pyruvate + 2 ATP = atromentin + 2 AMP + 2 diphosphate + H(+). Its function is as follows. Nonribosomal peptide synthetase that mediates the biosynthesis of atromentin. AtrA first activates 4-hydroxyphenylpyruvate (HPPA) through its A domain to AMP-HPPA. The HPPA unit is then loaded to the T domain and eventually transferred to the TE domain. Another HPPA unit is then loaded onto the T domain. The TE domain then catalyzes the condensation of the two HPPA units and the release of atromentin via cyclization. The sequence is that of Nonribosomal peptide synthetase atrA from Aspergillus terreus (strain NIH 2624 / FGSC A1156).